The chain runs to 284 residues: Homeobox protein SIX1 (284 aa).

The homeobox DNA-binding region spans Gly-124–Glu-183. The interval Val-168–Asp-269 is disordered. The span at Asp-179 to Thr-190 shows a compositional bias: basic and acidic residues. The segment covering Arg-242–Asp-269 has biased composition (polar residues).

This sequence belongs to the SIX/Sine oculis homeobox family. As to quaternary structure, interacts with DACH1. Interacts with EYA1. Interacts with EYA2. Interacts with CDH1. Interacts with TBX18. Interacts with CEBPA. Interacts with CEBPB. Interacts with EBF2. In terms of processing, phosphorylated during interphase; becomes hyperphosphorylated during mitosis. Hyperphosphorylation impairs binding to promoter elements. Post-translationally, ubiquitinated by the anaphase promoting complex (APC), leading to its proteasomal degradation. In terms of tissue distribution, specifically expressed in skeletal muscle.

The protein resides in the nucleus. It localises to the cytoplasm. Transcription factor that is involved in the regulation of cell proliferation, apoptosis and embryonic development. Plays an important role in the development of several organs, including kidney, muscle and inner ear. Depending on context, functions as a transcriptional repressor or activator. Lacks an activation domain, and requires interaction with EYA family members for transcription activation. Mediates nuclear translocation of EYA1 and EYA2. Binds the 5'-TCA[AG][AG]TTNC-3' motif present in the MEF3 element in the MYOG promoter and CIDEA enhancer. Regulates the expression of numerous genes, including MYC, CCND1 and EZR. Acts as an activator of the IGFBP5 promoter, probably coactivated by EYA2. Repression of precursor cell proliferation in myoblasts is switched to activation through recruitment of EYA3 to the SIX1-DACH1 complex. During myogenesis, seems to act together with EYA2 and DACH2. Regulates the expression of CCNA1. Promotes brown adipocyte differentiation. This is Homeobox protein SIX1 (SIX1) from Homo sapiens (Human).